Here is a 446-residue protein sequence, read N- to C-terminus: Alpha-1,6-mannosyl-glycoprotein 2-beta-N-acetylglucosaminyltransferase (446 aa).

At Met1–Lys9 the chain is on the cytoplasmic side. A helical; Signal-anchor for type II membrane protein transmembrane segment spans residues Val10–Gly29. Over Arg30–Gln446 the chain is Lumenal. N-linked (GlcNAc...) asparagine glycosylation is found at Asn69 and Asn86. Substrate-binding positions include Gln123–Arg127 and Asp154. The cysteines at positions 196 and 210 are disulfide-linked. Gln229–His233 provides a ligand contact to substrate. Asp261 contacts Mn(2+). Residues Cys283 and Cys286 are joined by a disulfide bond. Arg298 serves as a coordination point for substrate. Cystine bridges form between Cys334/Cys357, Cys339/Cys439, and Cys378/Cys386. His374 serves as a coordination point for Mn(2+).

The protein belongs to the glycosyltransferase 16 (GT16) protein family. As to quaternary structure, homodimer. The cofactor is Mn(2+).

The protein localises to the golgi apparatus membrane. It catalyses the reaction an N(4)-{beta-D-GlcNAc-(1-&gt;2)-alpha-D-Man-(1-&gt;3)-[alpha-D-Man-(1-&gt;6)]-beta-D-Man-(1-&gt;4)-beta-D-GlcNAc-(1-&gt;4)-beta-D-GlcNAc}-L-asparaginyl-[protein] + UDP-N-acetyl-alpha-D-glucosamine = N(4)-{beta-D-GlcNAc-(1-&gt;2)-alpha-D-Man-(1-&gt;3)-[beta-D-GlcNAc-(1-&gt;2)-alpha-D-Man-(1-&gt;6)]-beta-D-Man-(1-&gt;4)-beta-D-GlcNAc-(1-&gt;4)-beta-D-GlcNAc}-L-asparaginyl-[protein] + UDP + H(+). It functions in the pathway protein modification; protein glycosylation. Plays an essential role in protein N-glycosylation. Catalyzes the transfer of N-acetylglucosamine (GlcNAc) onto the free terminal mannose moiety in the core structure of the nascent N-linked glycan chain, giving rise to the second branch in complex glycans. This chain is Alpha-1,6-mannosyl-glycoprotein 2-beta-N-acetylglucosaminyltransferase (MGAT2), found in Sus scrofa (Pig).